Consider the following 123-residue polypeptide: Small ribosomal subunit protein bS16 (123 aa).

This sequence belongs to the bacterial ribosomal protein bS16 family.

The sequence is that of Small ribosomal subunit protein bS16 from Treponema pallidum (strain Nichols).